Reading from the N-terminus, the 160-residue chain is S-ribosylhomocysteine lyase (160 aa).

Histidine 57, histidine 61, and cysteine 127 together coordinate Fe cation.

This sequence belongs to the LuxS family. Homodimer. Requires Fe cation as cofactor.

The enzyme catalyses S-(5-deoxy-D-ribos-5-yl)-L-homocysteine = (S)-4,5-dihydroxypentane-2,3-dione + L-homocysteine. In terms of biological role, involved in the synthesis of autoinducer 2 (AI-2) which is secreted by bacteria and is used to communicate both the cell density and the metabolic potential of the environment. The regulation of gene expression in response to changes in cell density is called quorum sensing. Catalyzes the transformation of S-ribosylhomocysteine (RHC) to homocysteine (HC) and 4,5-dihydroxy-2,3-pentadione (DPD). The polypeptide is S-ribosylhomocysteine lyase (Streptococcus gordonii (strain Challis / ATCC 35105 / BCRC 15272 / CH1 / DL1 / V288)).